Reading from the N-terminus, the 273-residue chain is Beta-lactamase OXA-133 (273 aa).

The N-terminal stretch at 1–17 is a signal peptide; that stretch reads MNKYFTCYVVASLFFSG. C18 carries N-palmitoyl cysteine lipidation. A lipid anchor (S-diacylglycerol cysteine) is attached at C18. The active-site Acyl-ester intermediate is the S79. The residue at position 82 (K82) is an N6-carboxylysine. 216–218 contacts substrate; the sequence is KTG.

This sequence belongs to the class-D beta-lactamase family.

It is found in the cell membrane. It catalyses the reaction a beta-lactam + H2O = a substituted beta-amino acid. Catalyzes the hydrolysis of beta-lactam antibiotics. This chain is Beta-lactamase OXA-133, found in Acinetobacter radioresistens.